Here is a 197-residue protein sequence, read N- to C-terminus: MTSPILTGIFGGSFDPPHEGHSGILKSFFREVPDCREIFLIPNRQNPLKGEKFSSSENILEMLNLFVSEFSETIRILDLELNHPGPSYTIETIQKLKTLHPNREFVLLIGEDNYSNFHKWRNYEKILDEVRKVFVFRRFSEVVPRNSKLFSQFQFLKNPLIPASSTDLRQSFFQSTIPDRIPKKVLDYILRNRLYSK.

This sequence belongs to the NadD family.

It carries out the reaction nicotinate beta-D-ribonucleotide + ATP + H(+) = deamido-NAD(+) + diphosphate. The protein operates within cofactor biosynthesis; NAD(+) biosynthesis; deamido-NAD(+) from nicotinate D-ribonucleotide: step 1/1. In terms of biological role, catalyzes the reversible adenylation of nicotinate mononucleotide (NaMN) to nicotinic acid adenine dinucleotide (NaAD). This Leptospira borgpetersenii serovar Hardjo-bovis (strain JB197) protein is Probable nicotinate-nucleotide adenylyltransferase.